The primary structure comprises 150 residues: Ribonuclease K6 (150 aa).

An N-terminal signal peptide occupies residues 1 to 23 (MVLCFPLLLLLLVLWGPVCLLHA). Histidine 38 acts as the Proton acceptor in catalysis. 4 disulfide bridges follow: cysteine 46–cysteine 104, cysteine 60–cysteine 114, cysteine 78–cysteine 129, and cysteine 85–cysteine 92. Asparagine 55 carries an N-linked (GlcNAc...) asparagine glycan. Substrate-binding positions include 61 to 65 (KHQNT) and lysine 86. Asparagine 100 carries N-linked (GlcNAc...) asparagine glycosylation. Residue arginine 105 coordinates substrate. The Proton donor role is filled by histidine 145.

It belongs to the pancreatic ribonuclease family. In terms of assembly, interacts (via N-terminus) with bacterial lipopolysaccharide (LPS).

It localises to the secreted. The protein localises to the lysosome. It is found in the cytoplasmic granule. Ribonuclease which shows a preference for the pyrimidines uridine and cytosine. Has potent antibacterial activity against a range of Gram-positive and Gram-negative bacteria, including P.aeruginosa, A.baumanii, M.luteus, S.aureus, E.faecalis, E.faecium, S.saprophyticus and E.coli. Causes loss of bacterial membrane integrity, and also promotes agglutination of Gram-negative bacteria. Probably contributes to urinary tract sterility. Bactericidal activity is independent of RNase activity. This Miopithecus talapoin (Angolan talapoin) protein is Ribonuclease K6 (RNASE6).